A 73-amino-acid polypeptide reads, in one-letter code: DNA-directed RNA polymerase subunit omega (73 aa).

Belongs to the RNA polymerase subunit omega family. In terms of assembly, the RNAP catalytic core consists of 2 alpha, 1 beta, 1 beta' and 1 omega subunit. When a sigma factor is associated with the core the holoenzyme is formed, which can initiate transcription.

It catalyses the reaction RNA(n) + a ribonucleoside 5'-triphosphate = RNA(n+1) + diphosphate. Its function is as follows. Promotes RNA polymerase assembly. Latches the N- and C-terminal regions of the beta' subunit thereby facilitating its interaction with the beta and alpha subunits. This chain is DNA-directed RNA polymerase subunit omega, found in Maridesulfovibrio salexigens (strain ATCC 14822 / DSM 2638 / NCIMB 8403 / VKM B-1763) (Desulfovibrio salexigens).